A 261-amino-acid chain; its full sequence is Protein FAM216A (261 aa).

The segment at 1–52 (MPSRCPGVAGPPALARTEGSEGSAGQSYHQNSKGTGEQHKAERIKEGHRMSS) is disordered. The segment covering 23-35 (SAGQSYHQNSKGT) has biased composition (polar residues). A compositionally biased stretch (basic and acidic residues) spans 36–49 (GEQHKAERIKEGHR).

Belongs to the FAM216 family.

This Rattus norvegicus (Rat) protein is Protein FAM216A (Fam216a).